The following is a 500-amino-acid chain: Transcription factor-like 5 protein (500 aa).

Composition is skewed to pro residues over residues 1-12 and 196-210; these read MSGPGPREPPPE and AEPP…PPEP. Disordered regions lie at residues 1-34 and 191-211; these read MSGP…ALGE and FNSI…PEPG. An R3 epitope (recognized by Chagas's antibodies) region spans residues 347 to 356; that stretch reads MRQLDTNVER. The disordered stretch occupies residues 365–410; the sequence is VGEGATATQGAWQSSESSQANLGEQAQSGPQGGRSQRRERHNRMER. Over residues 370 to 393 the composition is skewed to polar residues; the sequence is TATQGAWQSSESSQANLGEQAQSG. In terms of domain architecture, bHLH spans 400 to 450; the sequence is QRRERHNRMERDRRRRIRICCDELNLLVPFCNAETDKATTLQWTTAFLKYI. Positions 481–500 are R1 epitope (recognized by Chagas's antibodies); it reads SLVTCPAQGSLQSSPSMEIK.

In terms of assembly, efficient DNA binding requires dimerization with another bHLH protein. As to expression, isoform 3 is testis specific. Isoform 2 is pancreas specific.

The protein localises to the nucleus. In terms of biological role, putative transcription factor. Isoform 3 may play a role in early spermatogenesis. The chain is Transcription factor-like 5 protein (TCFL5) from Homo sapiens (Human).